An 89-amino-acid chain; its full sequence is Small ribosomal subunit protein uS15 (89 aa).

It belongs to the universal ribosomal protein uS15 family. Part of the 30S ribosomal subunit. Forms a bridge to the 50S subunit in the 70S ribosome, contacting the 23S rRNA.

One of the primary rRNA binding proteins, it binds directly to 16S rRNA where it helps nucleate assembly of the platform of the 30S subunit by binding and bridging several RNA helices of the 16S rRNA. Its function is as follows. Forms an intersubunit bridge (bridge B4) with the 23S rRNA of the 50S subunit in the ribosome. The protein is Small ribosomal subunit protein uS15 of Pseudarthrobacter chlorophenolicus (strain ATCC 700700 / DSM 12829 / CIP 107037 / JCM 12360 / KCTC 9906 / NCIMB 13794 / A6) (Arthrobacter chlorophenolicus).